The chain runs to 349 residues: MSIDKMSLRKRVENIERISIIPEGTKSEDTKGRIIKENQDDIRTVFMVDRDRIIHSKSFRRLKHKTQVYIKTWGDHYRTRLTHTLEVAQIGKTIGKSIGLNEDLIEAIALGHDIGHVAFAHSGEEVLNELLPNGFKHNINSIRVLTKIEKQGKGLNLTKEVLDGILHHSGFSNKKDITKAFTLEGQVVKYSDKIAYVNHDIDDSIRAGLLHESDLPKDLINVLGRNHSDRIDTLVKDCINKTLENIKLGTIEVGMSEKIEIALKELRKFMFQRVYKGSILKEERDKAKFVLYQVFNYYLKNSNKMPEFYKNIVEQEGLYQGVADYISGMSDDYCLLLFNNIYVPKIVIY.

The 118-residue stretch at 80 to 197 (RLTHTLEVAQ…VKYSDKIAYV (118 aa)) folds into the HD domain.

It belongs to the dGTPase family. Type 2 subfamily.

The chain is Deoxyguanosinetriphosphate triphosphohydrolase-like protein from Clostridium tetani (strain Massachusetts / E88).